A 405-amino-acid chain; its full sequence is Na(+)-translocating NADH-quinone reductase subunit F (405 aa).

Residues 3-23 (IILGIVMFTVIVLVLALMILF) traverse the membrane as a helical segment. Residues 32–124 (GDITIKVNGE…DMDIEVPEEV (93 aa)) form the 2Fe-2S ferredoxin-type domain. [2Fe-2S] cluster is bound by residues Cys67, Cys73, Cys76, and Cys108. Positions 127-267 (VKKWECTVIS…SGPFGEFFAK (141 aa)) constitute an FAD-binding FR-type domain. Residues 270-387 (DAEMVFIGGG…PIMNQSVIKM (118 aa)) form a catalytic region.

This sequence belongs to the NqrF family. As to quaternary structure, composed of six subunits; NqrA, NqrB, NqrC, NqrD, NqrE and NqrF. The cofactor is [2Fe-2S] cluster. It depends on FAD as a cofactor.

Its subcellular location is the cell inner membrane. It carries out the reaction a ubiquinone + n Na(+)(in) + NADH + H(+) = a ubiquinol + n Na(+)(out) + NAD(+). Its function is as follows. NQR complex catalyzes the reduction of ubiquinone-1 to ubiquinol by two successive reactions, coupled with the transport of Na(+) ions from the cytoplasm to the periplasm. The first step is catalyzed by NqrF, which accepts electrons from NADH and reduces ubiquinone-1 to ubisemiquinone by a one-electron transfer pathway. This chain is Na(+)-translocating NADH-quinone reductase subunit F, found in Neisseria meningitidis serogroup B (strain ATCC BAA-335 / MC58).